The sequence spans 255 residues: tRNA (guanine-N(1)-)-methyltransferase (255 aa).

S-adenosyl-L-methionine is bound by residues Gly117 and 137–142 (LGDFVL).

It belongs to the RNA methyltransferase TrmD family. As to quaternary structure, homodimer.

It localises to the cytoplasm. The enzyme catalyses guanosine(37) in tRNA + S-adenosyl-L-methionine = N(1)-methylguanosine(37) in tRNA + S-adenosyl-L-homocysteine + H(+). In terms of biological role, specifically methylates guanosine-37 in various tRNAs. This Paraburkholderia phytofirmans (strain DSM 17436 / LMG 22146 / PsJN) (Burkholderia phytofirmans) protein is tRNA (guanine-N(1)-)-methyltransferase.